The primary structure comprises 400 residues: U-box domain-containing protein 37 (400 aa).

Residues Lys229–Leu298 adopt a coiled-coil conformation. One can recognise a U-box domain in the interval Glu324–Phe398.

It catalyses the reaction S-ubiquitinyl-[E2 ubiquitin-conjugating enzyme]-L-cysteine + [acceptor protein]-L-lysine = [E2 ubiquitin-conjugating enzyme]-L-cysteine + N(6)-ubiquitinyl-[acceptor protein]-L-lysine.. The protein operates within protein modification; protein ubiquitination. Its function is as follows. Functions as an E3 ubiquitin ligase. This is U-box domain-containing protein 37 (PUB37) from Arabidopsis thaliana (Mouse-ear cress).